Reading from the N-terminus, the 347-residue chain is Ataxin-7-like protein 3 (347 aa).

An SGF11-type zinc finger spans residues 84 to 105; sequence CVCPNCSRSIAASRFAPHLEKC. Residues 116–125 are compositionally biased toward low complexity; the sequence is ANRRIANSNN. Residues 116-184 are disordered; sequence ANRRIANSNN…GELSNSDPFK (69 aa). S129 and S131 each carry phosphoserine. Over residues 132–141 the composition is skewed to acidic residues; sequence DQEDNDDIND. An SCA7 domain is found at 196–263; it reads LGPEELRSLL…SLDNDSFDMT (68 aa). Low complexity predominate over residues 275–288; it reads DGSSDLSPSDSGSS. The interval 275-347 is disordered; it reads DGSSDLSPSD…PTPSIYDDIN (73 aa). S278, S281, and S326 each carry phosphoserine.

Belongs to the SGF11 family. As to quaternary structure, component of some SAGA transcription coactivator-HAT complexes, at least composed of ATXN7, ATXN7L3, ENY2, GCN5L2, SUPT3H, TAF10, TRRAP and USP22. Within the SAGA complex, ENY2, ATXN7, ATXN7L3, and USP22 form an additional subcomplex of SAGA called the DUB module (deubiquitination module). Interacts directly with ENY2 and USP22.

The protein resides in the nucleus. In terms of biological role, component of the transcription regulatory histone acetylation (HAT) complex SAGA, a multiprotein complex that activates transcription by remodeling chromatin and mediating histone acetylation and deubiquitination. Within the SAGA complex, participates in a subcomplex that specifically deubiquitinates both histones H2A and H2B. The SAGA complex is recruited to specific gene promoters by activators such as MYC, where it is required for transcription. Required for nuclear receptor-mediated transactivation. Within the complex, it is required to recruit USP22 and ENY2 into the SAGA complex. Regulates H2B monoubiquitination (H2Bub1) levels. Affects subcellular distribution of ENY2, USP22 and ATXN7L3B. The sequence is that of Ataxin-7-like protein 3 from Homo sapiens (Human).